The primary structure comprises 340 residues: ATPase BagA (340 aa).

The ATP site is built by Gly-31, Gly-33, Lys-34, Ser-35, Thr-36, Asn-240, Pro-316, and Val-318.

It belongs to the arsA ATPase family. BagA/BagB subfamily. Forms a heterodimer composed of BagA and BagB. Interacts with Rv1509. Also interacts with a large number of proteins, including proteins required for mycolic acid biosynthesis.

With respect to regulation, the ATPase activity of the BagAB complex is not stimulated by antimonite, an arsenite substitute, suggesting that BagAB is not a transporter for this family of elements. Functionally, component of the heterodimeric BagAB ATPase complex, whose two subunits are actively involved in ATP hydrolysis. The ATPase activity is required to mediate resistance against nitric oxide (NO) and elevated levels of glycerol. The chain is ATPase BagA from Mycobacterium tuberculosis (strain ATCC 25618 / H37Rv).